The primary structure comprises 316 residues: MLPSSIQISGEPLSGAEVRDICRGLRDNAVRLLSLRGCRLCDRDFGRICRALAGATSLAQLNLNLGVVSSPSRIKQLAEALRTNRSIQSLFLHGSPLTDAGLALLNPALALHPALVALDLGDCMLGDEAINLICGLLPPDGAKSGLKELTLSANPGITPKGWSRLAIAVAHSSQVRVLNLDYNPLGDHVAGMLAVAVASSRTLEVLDLEGTGLTNQSAQTLLDMVENYPTALRSLVLAENSISPELQQQICDLLSEGEEEEEMAGGAADTQEWGRGREPAAHQRGGSSWKCPSDPNSQMVLMTSGLGDSLLAETEM.

7 LRR repeats span residues S57–A78, S86–N106, A114–L137, G145–A166, Q174–D187, T202–D223, and A231–I250. The segment at G257–N296 is disordered. The span at E272–A281 shows a compositional bias: basic and acidic residues.

This Rattus norvegicus (Rat) protein is Leucine-rich repeat-containing protein 73 (Lrrc73).